Reading from the N-terminus, the 172-residue chain is Protein GrpE (172 aa).

This sequence belongs to the GrpE family. Homodimer.

It localises to the cytoplasm. Its function is as follows. Participates actively in the response to hyperosmotic and heat shock by preventing the aggregation of stress-denatured proteins, in association with DnaK and GrpE. It is the nucleotide exchange factor for DnaK and may function as a thermosensor. Unfolded proteins bind initially to DnaJ; upon interaction with the DnaJ-bound protein, DnaK hydrolyzes its bound ATP, resulting in the formation of a stable complex. GrpE releases ADP from DnaK; ATP binding to DnaK triggers the release of the substrate protein, thus completing the reaction cycle. Several rounds of ATP-dependent interactions between DnaJ, DnaK and GrpE are required for fully efficient folding. The protein is Protein GrpE of Thermotoga maritima (strain ATCC 43589 / DSM 3109 / JCM 10099 / NBRC 100826 / MSB8).